The following is a 151-amino-acid chain: MFEDKRERPRTLHELCEALNVSMHNIQVVCVYCKKELCRADVYNVAFTEIKIVYRDNNPYAVCKQCLLFYSKIREYRRYSRSVYGTTLEAITKKSLYDLSIRCHRCQRPLGPEEKQKLVDEKKRFHEIAGRWTGQCANCWQRTRQRNETQV.

2 zinc fingers span residues Cys-30–Cys-66 and Cys-103–Cys-139. Positions Thr-149–Val-151 match the PDZ-binding domain motif.

It belongs to the papillomaviridae E6 protein family. Forms homodimers. Interacts with ubiquitin-protein ligase UBE3A/E6-AP and thus forms a complex with human TP53. Interacts with human NFX1 and MAGI3. Interacts with human IRF3; this interaction inhibits the establishment of antiviral state. Interacts with human TYK2; this interaction inhibits JAK-STAT activation by interferon alpha. Interacts with host DLG1; this interaction leads to the proteasomal degradation of DLG1.

It is found in the host cytoplasm. Its subcellular location is the host nucleus. Plays a major role in the induction and maintenance of cellular transformation. Acts mainly as an oncoprotein by stimulating the destruction of many host cell key regulatory proteins. E6 associates with host UBE3A/E6-AP ubiquitin-protein ligase, and inactivates tumor suppressors TP53 and TP73 by targeting them to the 26S proteasome for degradation. In turn, DNA damage and chromosomal instabilities increase and lead to cell proliferation and cancer development. The complex E6/E6AP targets several other substrates to degradation via the proteasome including host DLG1 or NFX1, a repressor of human telomerase reverse transcriptase (hTERT). The resulting increased expression of hTERT prevents the shortening of telomere length leading to cell immortalization. Other cellular targets including BAK1, Fas-associated death domain-containing protein (FADD) and procaspase 8, are degraded by E6/E6AP causing inhibition of apoptosis. E6 also inhibits immune response by interacting with host IRF3 and TYK2. These interactions prevent IRF3 transcriptional activities and inhibit TYK2-mediated JAK-STAT activation by interferon alpha resulting in inhibition of the interferon signaling pathway. This is Protein E6 from Human papillomavirus 51.